The primary structure comprises 135 residues: Mini-ribonuclease 3 (135 aa).

Residue Asp17 is part of the active site.

The protein belongs to the MrnC RNase family. In terms of assembly, homodimer. Mg(2+) is required as a cofactor.

It is found in the cytoplasm. In terms of biological role, involved in correct processing of both the 5' and 3' ends of 23S rRNA precursor. Processes 30S rRNA precursor transcript even in absence of ribonuclease 3 (Rnc); Rnc processes 30S rRNA into smaller rRNA precursors. The polypeptide is Mini-ribonuclease 3 (Bacillus cereus (strain ATCC 14579 / DSM 31 / CCUG 7414 / JCM 2152 / NBRC 15305 / NCIMB 9373 / NCTC 2599 / NRRL B-3711)).